Reading from the N-terminus, the 335-residue chain is tRNA N6-adenosine threonylcarbamoyltransferase (335 aa).

Histidine 109, histidine 113, and tyrosine 130 together coordinate a divalent metal cation. Residues 130–134 (YVSGG), aspartate 162, glycine 177, glutamate 181, and asparagine 266 each bind substrate. Residue aspartate 294 participates in a divalent metal cation binding.

Belongs to the KAE1 / TsaD family. In terms of assembly, component of the EKC/KEOPS complex composed of at least GON7, TP53RK, TPRKB, OSGEP and LAGE3; the whole complex dimerizes. It depends on a divalent metal cation as a cofactor. As to expression, widely expressed at low level. Expressed at intermediate level in lung. Weakly expressed in testis, skeletal muscle, kidney, liver, spleen, brain and heart.

It localises to the cytoplasm. The protein localises to the nucleus. The catalysed reaction is L-threonylcarbamoyladenylate + adenosine(37) in tRNA = N(6)-L-threonylcarbamoyladenosine(37) in tRNA + AMP + H(+). Component of the EKC/KEOPS complex that is required for the formation of a threonylcarbamoyl group on adenosine at position 37 (t(6)A37) in tRNAs that read codons beginning with adenine. The complex is probably involved in the transfer of the threonylcarbamoyl moiety of threonylcarbamoyl-AMP (TC-AMP) to the N6 group of A37. OSGEP likely plays a direct catalytic role in this reaction, but requires other protein(s) of the complex to fulfill this activity. The polypeptide is tRNA N6-adenosine threonylcarbamoyltransferase (Osgep) (Mus musculus (Mouse)).